The sequence spans 1866 residues: Rho GTPase-activating protein 100F (1866 aa).

3 disordered regions span residues 22 to 98 (MLCC…AGVK), 262 to 336 (RRGN…NNYS), and 466 to 530 (LRSS…DTEA). Low complexity predominate over residues 59 to 77 (GNQQHHGNQQHHGNQQQHH). The PDZ domain maps to 179-264 (LVEIVKRPGQ…LVLAIRQRRG (86 aa)). Pro residues predominate over residues 271 to 286 (PGPPTLSRPEQKPPPV). Residues 301–326 (TDRMPRPRSSRDRRTGDGREMTESRS) are compositionally biased toward basic and acidic residues. The residue at position 719 (serine 719) is a Phosphoserine. A disordered region spans residues 745-775 (AGPASPSGSILSTGGHQSPAPTPSATLPRPH). The span at 750–760 (PSGSILSTGGH) shows a compositional bias: polar residues. Positions 789 to 908 (KLDKPIVDIG…LRQSPLHQLA (120 aa)) constitute a C2 domain. Residues 948 to 1148 (ADLETVVNRE…YLLQIWPQPQ (201 aa)) enclose the Rho-GAP domain. Disordered regions lie at residues 1273–1328 (GGSV…QVKI), 1356–1380 (PTTQ…RRGN), 1393–1479 (SVVN…DLVS), 1514–1607 (FTPI…MVST), 1644–1727 (YTND…YGTL), and 1819–1840 (DEKP…ADKG). The segment covering 1282-1292 (DPSPLPLPGTP) has biased composition (pro residues). A compositionally biased stretch (low complexity) spans 1293–1302 (SPGSSSASTG). 3 stretches are compositionally biased toward polar residues: residues 1356-1377 (PTTQ…TASR), 1393-1408 (SVVN…YTGS), and 1416-1429 (GNSS…NASG). Over residues 1443–1479 (SSATSSSSSSQATVLSAGSTATSAPTTSSDDSDDLVS) the composition is skewed to low complexity. A compositionally biased stretch (polar residues) spans 1538–1587 (QLVTPISGSSSKPGATTGAISKYTTGSVESSINANSQKLSSPSRLCNSKD). 2 stretches are compositionally biased toward low complexity: residues 1590–1607 (SRTG…MVST) and 1644–1658 (YTND…SSKS). The span at 1659 to 1670 (GIGGGSGTGLGA) shows a compositional bias: gly residues. 2 stretches are compositionally biased toward low complexity: residues 1671–1688 (VSGA…LFGS) and 1696–1720 (GSSH…NHNT). Residues 1830–1839 (HGEEKLGADK) are compositionally biased toward basic and acidic residues.

As to quaternary structure, interacts (via PDZ domain) with Nrx-1; may recruit Nrx-1 to the presynaptic active zone.

The protein localises to the presynapse. GTPase activator for the Rho-type GTPases by converting them to an inactive GDP-bound state. Promotes the anchoring of Liprin-alpha clusters at synapses. Recruits and keeps Nrx-1 levels high in active zones in the presynapse opposite the postsynaptic region. The sequence is that of Rho GTPase-activating protein 100F (RhoGAP100F) from Drosophila melanogaster (Fruit fly).